The chain runs to 119 residues: Beta-2-microglobulin (119 aa).

A signal peptide spans 1–21 (MGKAAAVVLVTLVALLGLAQA). The 89-residue stretch at 25–113 (PKVQVYSRFP…HETLKEPQVY (89 aa)) folds into the Ig-like C1-type domain. C45 and C100 form a disulfide bridge.

It belongs to the beta-2-microglobulin family. In terms of assembly, heterodimer of an alpha chain and a beta chain. Beta-2-microglobulin is the beta-chain of major histocompatibility complex class I molecules.

The protein resides in the secreted. Component of the class I major histocompatibility complex (MHC). Involved in the presentation of peptide antigens to the immune system. The chain is Beta-2-microglobulin (B2M) from Gallus gallus (Chicken).